The following is a 127-amino-acid chain: Aspartate 1-decarboxylase (127 aa).

Ser-25 acts as the Schiff-base intermediate with substrate; via pyruvic acid in catalysis. Position 25 is a pyruvic acid (Ser) (Ser-25). Position 57 (Thr-57) interacts with substrate. The active-site Proton donor is the Tyr-58. 73–75 (GAA) is a binding site for substrate.

It belongs to the PanD family. In terms of assembly, heterooctamer of four alpha and four beta subunits. The cofactor is pyruvate. In terms of processing, is synthesized initially as an inactive proenzyme, which is activated by self-cleavage at a specific serine bond to produce a beta-subunit with a hydroxyl group at its C-terminus and an alpha-subunit with a pyruvoyl group at its N-terminus.

The protein localises to the cytoplasm. The catalysed reaction is L-aspartate + H(+) = beta-alanine + CO2. Its pathway is cofactor biosynthesis; (R)-pantothenate biosynthesis; beta-alanine from L-aspartate: step 1/1. Its function is as follows. Catalyzes the pyruvoyl-dependent decarboxylation of aspartate to produce beta-alanine. The protein is Aspartate 1-decarboxylase of Halalkalibacterium halodurans (strain ATCC BAA-125 / DSM 18197 / FERM 7344 / JCM 9153 / C-125) (Bacillus halodurans).